A 314-amino-acid chain; its full sequence is Thymidylate synthase (314 aa).

DUMP contacts are provided by residues Arg21 and 176 to 177 (RR). Cys196 acts as the Nucleophile in catalysis. Residues 216 to 219 (RSAD), Asn227, and 257 to 259 (HLY) contribute to the dUMP site. A (6R)-5,10-methylene-5,6,7,8-tetrahydrofolate-binding site is contributed by Asp219. A (6R)-5,10-methylene-5,6,7,8-tetrahydrofolate-binding site is contributed by Ser313.

This sequence belongs to the thymidylate synthase family. Bacterial-type ThyA subfamily. In terms of assembly, homodimer.

It is found in the cytoplasm. It catalyses the reaction dUMP + (6R)-5,10-methylene-5,6,7,8-tetrahydrofolate = 7,8-dihydrofolate + dTMP. It participates in pyrimidine metabolism; dTTP biosynthesis. Functionally, catalyzes the reductive methylation of 2'-deoxyuridine-5'-monophosphate (dUMP) to 2'-deoxythymidine-5'-monophosphate (dTMP) while utilizing 5,10-methylenetetrahydrofolate (mTHF) as the methyl donor and reductant in the reaction, yielding dihydrofolate (DHF) as a by-product. This enzymatic reaction provides an intracellular de novo source of dTMP, an essential precursor for DNA biosynthesis. This chain is Thymidylate synthase, found in Listeria monocytogenes serovar 1/2a (strain ATCC BAA-679 / EGD-e).